A 293-amino-acid polypeptide reads, in one-letter code: Formamidopyrimidine-DNA glycosylase (293 aa).

Catalysis depends on Pro-2, which acts as the Schiff-base intermediate with DNA. Glu-3 serves as the catalytic Proton donor. Lys-61 serves as the catalytic Proton donor; for beta-elimination activity. His-104, Arg-123, and Lys-169 together coordinate DNA. An FPG-type zinc finger spans residues 255–289 (DAYGREGEPCRRCGAIMRRDKFMNRSSFYCPRCQP). The Proton donor; for delta-elimination activity role is filled by Arg-279.

This sequence belongs to the FPG family. As to quaternary structure, monomer. Zn(2+) serves as cofactor.

The catalysed reaction is Hydrolysis of DNA containing ring-opened 7-methylguanine residues, releasing 2,6-diamino-4-hydroxy-5-(N-methyl)formamidopyrimidine.. It catalyses the reaction 2'-deoxyribonucleotide-(2'-deoxyribose 5'-phosphate)-2'-deoxyribonucleotide-DNA = a 3'-end 2'-deoxyribonucleotide-(2,3-dehydro-2,3-deoxyribose 5'-phosphate)-DNA + a 5'-end 5'-phospho-2'-deoxyribonucleoside-DNA + H(+). Its function is as follows. Involved in base excision repair of DNA damaged by oxidation or by mutagenic agents. Acts as a DNA glycosylase that recognizes and removes damaged bases. Has a preference for oxidized purines, such as 7,8-dihydro-8-oxoguanine (8-oxoG). Has AP (apurinic/apyrimidinic) lyase activity and introduces nicks in the DNA strand. Cleaves the DNA backbone by beta-delta elimination to generate a single-strand break at the site of the removed base with both 3'- and 5'-phosphates. The chain is Formamidopyrimidine-DNA glycosylase from Mycolicibacterium vanbaalenii (strain DSM 7251 / JCM 13017 / BCRC 16820 / KCTC 9966 / NRRL B-24157 / PYR-1) (Mycobacterium vanbaalenii).